Reading from the N-terminus, the 390-residue chain is 8-demethyl-8-(2-methoxy-alpha-L-rhamnosyl)-tetracenomycin-C 3'-O-methyltransferase (390 aa).

S-adenosyl-L-methionine-binding positions include 202 to 208 (ELGIGGY), Ser217, Asp234, 252 to 253 (SQ), and Asp275. Asp275 provides a ligand contact to Mg(2+). Residue His278 is the Proton acceptor of the active site. The Mg(2+) site is built by Glu303 and Asp304.

The protein belongs to the methyltransferase OleY/MycE family. Requires Mg(2+) as cofactor.

It carries out the reaction 8-demethyl-8-(2-O-methyl-alpha-L-rhamnosyl)-tetracenomycin C + S-adenosyl-L-methionine = 8-demethyl-8-(2,3-di-O-methyl-alpha-L-rhamnosyl)-tetracenomycin C + S-adenosyl-L-homocysteine + H(+). Its pathway is antibiotic biosynthesis. Functionally, O-methyltransferase involved in the biosynthesis of the permethylated L-rhamnose moiety of elloramycin, an antitumor polyketide. Mediates the methylation of the hydroxy groups at the 3'-position after the sugar moiety has been attached to the aglycon. In Streptomyces olivaceus, this protein is 8-demethyl-8-(2-methoxy-alpha-L-rhamnosyl)-tetracenomycin-C 3'-O-methyltransferase.